The following is a 465-amino-acid chain: Cysteine--tRNA ligase (465 aa).

Residue Cys-27 participates in Zn(2+) binding. A 'HIGH' region motif is present at residues 29–39 (PTVYNYIHIGN). Positions 207, 232, and 236 each coordinate Zn(2+). Residues 264 to 268 (KMSKS) carry the 'KMSKS' region motif. Residue Lys-267 coordinates ATP.

This sequence belongs to the class-I aminoacyl-tRNA synthetase family. As to quaternary structure, monomer. It depends on Zn(2+) as a cofactor.

Its subcellular location is the cytoplasm. The catalysed reaction is tRNA(Cys) + L-cysteine + ATP = L-cysteinyl-tRNA(Cys) + AMP + diphosphate. The chain is Cysteine--tRNA ligase from Clostridioides difficile (strain 630) (Peptoclostridium difficile).